The following is a 121-amino-acid chain: Large ribosomal subunit protein bL12 (121 aa).

This sequence belongs to the bacterial ribosomal protein bL12 family. As to quaternary structure, homodimer. Part of the ribosomal stalk of the 50S ribosomal subunit. Forms a multimeric L10(L12)X complex, where L10 forms an elongated spine to which 2 to 4 L12 dimers bind in a sequential fashion. Binds GTP-bound translation factors.

In terms of biological role, forms part of the ribosomal stalk which helps the ribosome interact with GTP-bound translation factors. Is thus essential for accurate translation. In Proteus mirabilis (strain HI4320), this protein is Large ribosomal subunit protein bL12.